A 493-amino-acid polypeptide reads, in one-letter code: MDQDYERRLLRQIIIQNENTVPCVSEMRRTLTPANSPVSSPSKHGDRFIPSRAGANWSVNFHRINENEKSPSQNRKAKDATSDNGKDGLAYSALLKNELLGAGIEKVQDPQTEDRRLQPSTPEHKGLFTYSLSSKRSSPDDGNDVSPYSLSPVSNKSQKLLRSPRKPTRKISKIPFKVLDAPELQDDFYLNLVDWSSLNVLSVGLGTCVYLWSACTSQVTRLCDLSVEGDSVTSVGWSERGNLVAVGTHKGFVQIWDAAAGKKLSMLEGHTARVGALAWNADQLSSGSRDRMILQRDIRTPPLQSERRLQGHRQEVCGLKWSTDHQLLASGGNDNKLLVWNHSSLSPVQQYTEHLAAVKAIAWSPHQHGLLASGGGTADRCIRFWNTLTGQPLQCIDTGSQVCNLAWSKHANELVSTHGYSQNQILVWKYPSLTQVAKLTGHSYRVLYLAMSPDGEAIVTGAGDETLRFWNVFSKTRSTKESVSVLNLFTRIR.

Disordered regions lie at residues Leu31–Ser51, Ile64–Gly88, and Glu105–Lys166. Thr32 bears the Phosphothreonine mark. Positions Thr32–Ser42 are enriched in polar residues. Ser36 carries the phosphoserine modification. Position 69 is an N6-acetyllysine (Lys69). 2 stretches are compositionally biased toward basic and acidic residues: residues Lys76–Lys86 and Lys106–Gly126. Phosphoserine occurs at positions 133, 138, 146, and 151. Positions Ser146–Leu160 are enriched in polar residues. N6-acetyllysine is present on Lys159. WD repeat units lie at residues Pro182–Leu222, Val227–Met266, Gly269–Glu306, Gly311–Gln350, Glu353–Cys395, Asp397–Lys438, and Gly441–Lys480.

The protein belongs to the WD repeat CDC20/Fizzy family. In terms of assembly, the unphosphorylated form interacts with APC/C during mitosis. Interacts with NINL. Interacts (in complex with the anaphase promoting complex APC) with MAD2L2; inhibits FZR1-mediated APC/C activation. Interacts with SIRT2. Interacts with USP37. Interacts (via WD repeats) with MAK. Interacts with RBBP8/CtIP; this interaction leads to RBBP8 proteasomal degradation. Interacts with HECW2. Interacts with SASS6; the interaction is regulated by CENATAC and leads to SASS6 proteasomal degradation. Interacts (via N-terminus) with CCNF. Interacts with CDC6. Interacts with TK1 (via the KEN box). In terms of processing, acetylated. Deacetylated by SIRT2 at Lys-69 and Lys-159; deacetylation enhances the interaction of FZR1 with CDC27, leading to activation of anaphase promoting complex/cyclosome (APC/C). Post-translationally, following DNA damage, it is dephosphorylated by CDC14B in G2 phase, leading to its reassociation with the APC/C, and allowing an efficient G2 DNA damage checkpoint. Phosphorylated by MAK.

The protein operates within protein modification; protein ubiquitination. Its function is as follows. Substrate-specific adapter for the anaphase promoting complex/cyclosome (APC/C) E3 ubiquitin-protein ligase complex. Associates with the APC/C in late mitosis, in replacement of CDC20, and activates the APC/C during anaphase and telophase. The APC/C remains active in degrading substrates to ensure that positive regulators of the cell cycle do not accumulate prematurely. At the G1/S transition FZR1 is phosphorylated, leading to its dissociation from the APC/C. Following DNA damage, it is required for the G2 DNA damage checkpoint: its dephosphorylation and reassociation with the APC/C leads to the ubiquitination of PLK1, preventing entry into mitosis. Acts as an adapter for APC/C to target the DNA-end resection factor RBBP8/CtIP for ubiquitination and subsequent proteasomal degradation. Through the regulation of RBBP8/CtIP protein turnover, may play a role in DNA damage response, favoring DNA double-strand repair through error-prone non-homologous end joining (NHEJ) over error-free, RBBP8-mediated homologous recombination (HR). This chain is Fizzy-related protein homolog (Fzr1), found in Mus musculus (Mouse).